The primary structure comprises 122 residues: MPRFSHLIGCVWQVLFVSAGAQAMASSFVVPSTAQMAGQLGIEATGSGVCAGPAEQANALAGDVACAEQWLGDKPVSWSPTPDGIWLMNAEGTGITHLNRQKEGEYTGRTPSGADVTLQRTN.

The signal sequence occupies residues 1–25 (MPRFSHLIGCVWQVLFVSAGAQAMA). Residues 101–122 (QKEGEYTGRTPSGADVTLQRTN) are disordered.

This sequence belongs to the protease inhibitor I38 family.

The protein localises to the periplasm. Inhibitor of the alkaline protease. The chain is Alkaline proteinase inhibitor (inh) from Pseudomonas tolaasii.